Consider the following 286-residue polypeptide: Bifunctional protein FolD 2 (286 aa).

NADP(+) is bound by residues 165 to 167 (GRG), Thr-192, and Val-233.

It belongs to the tetrahydrofolate dehydrogenase/cyclohydrolase family. As to quaternary structure, homodimer.

It catalyses the reaction (6R)-5,10-methylene-5,6,7,8-tetrahydrofolate + NADP(+) = (6R)-5,10-methenyltetrahydrofolate + NADPH. The catalysed reaction is (6R)-5,10-methenyltetrahydrofolate + H2O = (6R)-10-formyltetrahydrofolate + H(+). It functions in the pathway one-carbon metabolism; tetrahydrofolate interconversion. Its function is as follows. Catalyzes the oxidation of 5,10-methylenetetrahydrofolate to 5,10-methenyltetrahydrofolate and then the hydrolysis of 5,10-methenyltetrahydrofolate to 10-formyltetrahydrofolate. The polypeptide is Bifunctional protein FolD 2 (Rhodococcus jostii (strain RHA1)).